We begin with the raw amino-acid sequence, 359 residues long: MSGLTVSIRGRNGAFAIEAGFAAEGGVTALFGHSGAGKTTLLKMIAGTLRPENGRIAVGDFTLFDAQKGINLPPEKRRIGYVFQDARLFAYMSVKRNLTYARWAGHRPATRSFDEVVALLGIGHLLDRRPSTLSGGERQRVAIGRALLSDPALLLLDEPLSSLDHARRQEILPFIERLRDESHVPIVYVSHEIDEVARLADQIVLLSAGRVTASGAAADIFPLIDAESEGGGVLLEGIVSAYDERYKLAEIDLGGASFQLSDAGLKQTMHVRLRVRARDVSIARKIPEAISIRNLLPVTVTGIERGEGPNAHVFLDFRGRRLGARLTRRSVDDLGLSVGDQVVALVKAVSVDRAAIREK.

The ABC transporter domain maps to 1-233 (MSGLTVSIRG…IDAESEGGGV (233 aa)). 32 to 39 (GHSGAGKT) contacts ATP. The region spanning 289-355 (AISIRNLLPV…VKAVSVDRAA (67 aa)) is the Mop domain.

This sequence belongs to the ABC transporter superfamily. Molybdate importer (TC 3.A.1.8) family. As to quaternary structure, the complex is composed of two ATP-binding proteins (ModC), two transmembrane proteins (ModB) and a solute-binding protein (ModA).

It is found in the cell inner membrane. The catalysed reaction is molybdate(out) + ATP + H2O = molybdate(in) + ADP + phosphate + H(+). Functionally, part of the ABC transporter complex ModABC involved in molybdenum import. Responsible for energy coupling to the transport system. The protein is Molybdenum import ATP-binding protein ModC of Brucella abortus (strain 2308).